Reading from the N-terminus, the 356-residue chain is Arginine kinase (356 aa).

An N-acetylalanine modification is found at A2. Residues 9–91 (KLEEGFKKLE…FDPIIEDYHK (83 aa)) enclose the Phosphagen kinase N-terminal domain. 64 to 68 (GVGIY) is a binding site for L-arginine. Positions 119 to 356 (FVISTRVRCG…LELIKIEKEM (238 aa)) constitute a Phosphagen kinase C-terminal domain. ATP contacts are provided by residues 122 to 126 (STRVR) and H185. Residue E225 participates in L-arginine binding. R229 is a binding site for ATP. C271 lines the L-arginine pocket. Residues 280 to 284 (RASVH) and 309 to 314 (RGTRGE) contribute to the ATP site. Residue E314 participates in L-arginine binding.

This sequence belongs to the ATP:guanido phosphotransferase family.

It carries out the reaction L-arginine + ATP = N(omega)-phospho-L-arginine + ADP + H(+). The protein is Arginine kinase of Homarus gammarus (European lobster).